A 95-amino-acid chain; its full sequence is Small ribosomal subunit protein uS14 (95 aa).

This sequence belongs to the universal ribosomal protein uS14 family. As to quaternary structure, part of the 30S ribosomal subunit. Contacts proteins S3 and S10.

Functionally, binds 16S rRNA, required for the assembly of 30S particles and may also be responsible for determining the conformation of the 16S rRNA at the A site. The protein is Small ribosomal subunit protein uS14 (rpsN) of Carsonella ruddii.